A 275-amino-acid chain; its full sequence is MRISPSETAMKLSLSPPPYADAPVVVLISGLGGSGSYWLPQLAVLDQEYQVVCYDQRGTGNNPDTLAEDYSIAQMAAELHQALVAAGIERYAVVGHALGALVGMQLALDYPASVTVLVSVNGWLRINAHTRRCFQVREQLLHSGGAQAWVEAQPLFLYPADWMAARAPRLEAEGALALAHFQGKNNLLRRLNALKRADFSRHADRIRCPVQIICASDDLLVPSACSSELHAALPDSQKMVMRYGGHACNVTDPETFNALLLNGLASLLHHREAAL.

The protein belongs to the AB hydrolase superfamily. Hydrolase RutD family.

The enzyme catalyses carbamate + 2 H(+) = NH4(+) + CO2. Its function is as follows. Involved in pyrimidine catabolism. May facilitate the hydrolysis of carbamate, a reaction that can also occur spontaneously. This chain is Putative carbamate hydrolase RutD, found in Escherichia coli O6:H1 (strain CFT073 / ATCC 700928 / UPEC).